Here is a 128-residue protein sequence, read N- to C-terminus: Large ribosomal subunit protein eL8 (128 aa).

Belongs to the eukaryotic ribosomal protein eL8 family. In terms of assembly, part of the 50S ribosomal subunit. Probably part of the RNase P complex.

It localises to the cytoplasm. In terms of biological role, multifunctional RNA-binding protein that recognizes the K-turn motif in ribosomal RNA, the RNA component of RNase P, box H/ACA, box C/D and box C'/D' sRNAs. The chain is Large ribosomal subunit protein eL8 from Ignicoccus hospitalis (strain KIN4/I / DSM 18386 / JCM 14125).